The chain runs to 112 residues: UPF0102 protein CHAB381_0216 (112 aa).

The protein belongs to the UPF0102 family.

The chain is UPF0102 protein CHAB381_0216 from Campylobacter hominis (strain ATCC BAA-381 / DSM 21671 / CCUG 45161 / LMG 19568 / NCTC 13146 / CH001A).